A 386-amino-acid polypeptide reads, in one-letter code: Ovalbumin (386 aa).

Position 2 is an N-acetylglycine (G2). The segment at residues 22 to 48 (HHANENIFYSPFTIISALAMVYLGAKD) is a signal peptide (not cleaved). S69 bears the Phosphoserine mark. C74 and C121 form a disulfide bridge. N-linked (GlcNAc...) asparagine glycosylation is found at N293 and N312. S345 is modified (phosphoserine). An N-linked (GlcNAc...) asparagine glycan is attached at N372.

Belongs to the serpin family. Ov-serpin subfamily. The signal sequence is not cleaved. The functional signal for membrane translocation of ovalbumin becomes accessible when the nascent chain is 50 to 60 residues long. The hydrophobic sequence which lies between residues 27 and 43 folds back on the preceding residues to form an amphipathic hairpin structure which is the signal element recognized by the membrane. Major protein of egg white.

The protein localises to the secreted. In terms of biological role, storage protein of egg white. Lack protease inhibitory activity. The polypeptide is Ovalbumin (SERPINB14) (Meleagris gallopavo (Wild turkey)).